The primary structure comprises 256 residues: Triosephosphate isomerase (256 aa).

9 to 11 (NWK) contributes to the substrate binding site. Catalysis depends on histidine 96, which acts as the Electrophile. Glutamate 168 (proton acceptor) is an active-site residue. Substrate is bound by residues serine 213 and 234–235 (GG).

The protein belongs to the triosephosphate isomerase family. In terms of assembly, homodimer.

The protein resides in the cytoplasm. It carries out the reaction D-glyceraldehyde 3-phosphate = dihydroxyacetone phosphate. The protein operates within carbohydrate biosynthesis; gluconeogenesis. It functions in the pathway carbohydrate degradation; glycolysis; D-glyceraldehyde 3-phosphate from glycerone phosphate: step 1/1. Its function is as follows. Involved in the gluconeogenesis. Catalyzes stereospecifically the conversion of dihydroxyacetone phosphate (DHAP) to D-glyceraldehyde-3-phosphate (G3P). This is Triosephosphate isomerase from Baumannia cicadellinicola subsp. Homalodisca coagulata.